Here is a 470-residue protein sequence, read N- to C-terminus: FAD-dependent monooxygenase nvfK (470 aa).

The N-terminal stretch at 1 to 23 (MEKAKFKVVIVGGSITGLTLAHC) is a signal peptide. Positions 35, 49, and 108 each coordinate FAD. Asn-121 carries an N-linked (GlcNAc...) asparagine glycan. Tyr-216 is a catalytic residue. Residues Asp-308 and Ala-321 each coordinate FAD. A helical membrane pass occupies residues 450–470 (ILMSIVLVAPAWVYIFSSLVW).

This sequence belongs to the paxM FAD-dependent monooxygenase family. Requires FAD as cofactor.

It localises to the membrane. The enzyme catalyses (3R)-3-farnesyl-6-hydroxy-2,3,5-trimethyl-4-oxocyclohexa-1,5-diene-1-carboxylate + 2-oxoglutarate + O2 = (3R)-[(10S)-11-epoxyfarnesyl]-2,3,5-trimethyl-6-oxido-4-oxocyclohexa-1,5-diene-1-carboxylate + succinate + CO2. It functions in the pathway secondary metabolite biosynthesis; terpenoid biosynthesis. Its function is as follows. FAD-dependent monooxygenase; part of the gene cluster that mediates the biosynthesis of novofumigatonin, a heavily oxygenated meroterpenoid containing a unique orthoester moiety. The first step of the pathway is the synthesis of 3,5-dimethylorsellinic acid (DMOA) by the polyketide synthase nvfA via condensation of one acetyl-CoA starter unit with 3 malonyl-CoA units and 2 methylations. DMOA is then converted to farnesyl-DMOA by the farnesyltransferase nvfB. Epoxydation by FAD-dependent monooxygenase nvfK, followed by a protonation-initiated cyclization catalyzed by the terpene cyclase nvfL leads to the production of asnavolin H. The short chain dehydrogenase nvfC then as a 3-OH dehydrogenase of asnovolin H to yield chemesin D. There are two branches to synthesize asnovolin A from chemesin D. In one branch, chemesin D undergoes Baeyer-Villiger oxidation by nvfH, methylation by nvfJ, and enoyl reduction by the nvfM D enoylreductase that reduces the double bond between C-5'and C-6', to form respectively asnovolin I, asnovolin K, and asnovolin A. In the other branch, the methylation precedes the Baeyer-Villiger oxidation and the enoyl reduction to yield asnovolin A via the asnovolin J intermediate. Asnovolin A is further converted to fumigatonoid A by the Fe(II)/2-oxoglutarate-dependent dioxygenase nvfI that catalyzes an endoperoxidation reaction. The alpha/beta hydrolase nvfD then acts as an epimerase that converts fumigatonoid A to its C-5' epimer, which then undergoes spontaneous or nvfD-catalyzed lactonization. The following step utilizes the ketoreductase nvfG to produce fumigatonoid B. The dioxygenase nvfE further converts fumigatonoid B into fumigatonoid C. Finally the Fe(II)/2-oxoglutarate-dependent dioxygenase nvfF catalyzes two rounds of oxidation to transform fumigatonoid C into the end product, novofumigatonin A. The chain is FAD-dependent monooxygenase nvfK from Aspergillus novofumigatus (strain IBT 16806).